The chain runs to 475 residues: Beta-amyrin 6-beta-monooxygenase (475 aa).

Residues 6–22 (LYSLAFALVYISLYFIF) traverse the membrane as a helical segment. C423 serves as a coordination point for heme.

Belongs to the cytochrome P450 family. Requires heme as cofactor. As to expression, specifically expressed in roots.

It is found in the membrane. The enzyme catalyses beta-amyrin + reduced [NADPH--hemoprotein reductase] + O2 = daturadiol + oxidized [NADPH--hemoprotein reductase] + H2O + H(+). Functionally, catalyzes the C-6 beta-hydroxylation of beta-amyrin to form daturadiol. Catalyzes the C-6 beta-hydroxylation of alpha-amyrin to form 6-beta-hydroxy-alpha-amyrin. This chain is Beta-amyrin 6-beta-monooxygenase, found in Solanum lycopersicum (Tomato).